A 329-amino-acid polypeptide reads, in one-letter code: GDP-mannose transporter (329 aa).

At 1 to 11 (MADKGSVAAKS) the chain is on the cytoplasmic side. The chain crosses the membrane as a helical span at residues 12–32 (LTNSAPLSIFSYCAASILMTV). Residues 33–40 (TNKYAVSG) lie on the Lumenal side of the membrane. Residues 41–61 (VDFNFNFFLLAVQGIVCITLI) traverse the membrane as a helical segment. At 62–83 (SSLKQLNVITFREFNKVEAKKW) the chain is on the cytoplasmic side. Residues 84 to 104 (FPIAVLLVVMIYTSSKALQYL) form a helical membrane-spanning segment. Topologically, residues 105–107 (SIP) are lumenal. The chain crosses the membrane as a helical span at residues 108-128 (IYTIFKNLTIILIAYGEVIWF). The Cytoplasmic portion of the chain corresponds to 129 to 131 (GGR). The chain crosses the membrane as a helical span at residues 132 to 152 (VTNLALGSFVLMVLSSAVASY). Residues 153–163 (GDSNVDTGKLN) lie on the Lumenal side of the membrane. A helical transmembrane segment spans residues 164–184 (FNIGYFWMFTNCFSSAAFVLF). Residues 185-196 (MRKRIKLTNFKD) are Cytoplasmic-facing. Residues 197-217 (FDTMYYNNLLSIPILLFASLT) traverse the membrane as a helical segment. Topologically, residues 218-237 (TEDWSAKNIAQNFPEDTKYA) are lumenal. A helical transmembrane segment spans residues 238–258 (VIASMIISGMSAVGISYTSAW). Residues 259 to 266 (CVRVTSST) lie on the Cytoplasmic side of the membrane. Residues 267 to 287 (TYSMVGALNKLPIALSGLLFF) form a helical membrane-spanning segment. Topologically, residues 288 to 290 (KAP) are lumenal. Residues 291–311 (INFYSISSIFIGFAAGLVYAI) form a helical membrane-spanning segment. Topologically, residues 312-329 (AKQKQKKEDELQLPTDKS) are cytoplasmic.

This sequence belongs to the TPT transporter family. SLC35D subfamily. As to quaternary structure, homooligomer.

The protein localises to the golgi apparatus membrane. It localises to the cytoplasmic vesicle membrane. Its subcellular location is the endoplasmic reticulum membrane. Its function is as follows. Involved in the import of GDP-mannose from the cytoplasm into the Golgi lumen. The polypeptide is GDP-mannose transporter (VIG4) (Komagataella pastoris (Yeast)).